A 270-amino-acid polypeptide reads, in one-letter code: Putative pyruvate, phosphate dikinase regulatory protein (270 aa).

Residue 148-155 (GVSRTSKT) participates in ADP binding.

Belongs to the pyruvate, phosphate/water dikinase regulatory protein family. PDRP subfamily.

The enzyme catalyses N(tele)-phospho-L-histidyl/L-threonyl-[pyruvate, phosphate dikinase] + ADP = N(tele)-phospho-L-histidyl/O-phospho-L-threonyl-[pyruvate, phosphate dikinase] + AMP + H(+). The catalysed reaction is N(tele)-phospho-L-histidyl/O-phospho-L-threonyl-[pyruvate, phosphate dikinase] + phosphate + H(+) = N(tele)-phospho-L-histidyl/L-threonyl-[pyruvate, phosphate dikinase] + diphosphate. In terms of biological role, bifunctional serine/threonine kinase and phosphorylase involved in the regulation of the pyruvate, phosphate dikinase (PPDK) by catalyzing its phosphorylation/dephosphorylation. In Bacillus cytotoxicus (strain DSM 22905 / CIP 110041 / 391-98 / NVH 391-98), this protein is Putative pyruvate, phosphate dikinase regulatory protein.